Consider the following 413-residue polypeptide: Aspartate aminotransferase, cytoplasmic (413 aa).

3 residues coordinate L-aspartate: Gly39, Trp141, and Asn195. The residue at position 259 (Lys259) is an N6-(pyridoxal phosphate)lysine. Position 387 (Arg387) interacts with L-aspartate.

The protein belongs to the class-I pyridoxal-phosphate-dependent aminotransferase family. As to quaternary structure, homodimer. Requires pyridoxal 5'-phosphate as cofactor.

The protein resides in the cytoplasm. The catalysed reaction is L-aspartate + 2-oxoglutarate = oxaloacetate + L-glutamate. It catalyses the reaction L-cysteine + 2-oxoglutarate = 2-oxo-3-sulfanylpropanoate + L-glutamate. The enzyme catalyses (2S)-2-aminobutanoate + 2-oxoglutarate = 2-oxobutanoate + L-glutamate. It carries out the reaction 3-sulfino-L-alanine + 2-oxoglutarate = 3-sulfinopyruvate + L-glutamate. In terms of biological role, biosynthesis of L-glutamate from L-aspartate or L-cysteine. Important regulator of levels of glutamate, the major excitatory neurotransmitter of the vertebrate central nervous system. Acts as a scavenger of glutamate in brain neuroprotection. The aspartate aminotransferase activity is involved in hepatic glucose synthesis during development and in adipocyte glyceroneogenesis. Using L-cysteine as substrate, regulates levels of mercaptopyruvate, an important source of hydrogen sulfide. Mercaptopyruvate is converted into H(2)S via the action of 3-mercaptopyruvate sulfurtransferase (3MST). Hydrogen sulfide is an important synaptic modulator and neuroprotectant in the brain. In Bos taurus (Bovine), this protein is Aspartate aminotransferase, cytoplasmic.